A 151-amino-acid polypeptide reads, in one-letter code: SsrA-binding protein (151 aa).

The tract at residues 124–151 (GKKLHDKRESEKERDWNRQKSRLLKAHG) is disordered. The span at 129 to 141 (DKRESEKERDWNR) shows a compositional bias: basic and acidic residues. Residues 142–151 (QKSRLLKAHG) show a composition bias toward basic residues.

It belongs to the SmpB family.

Its subcellular location is the cytoplasm. Required for rescue of stalled ribosomes mediated by trans-translation. Binds to transfer-messenger RNA (tmRNA), required for stable association of tmRNA with ribosomes. tmRNA and SmpB together mimic tRNA shape, replacing the anticodon stem-loop with SmpB. tmRNA is encoded by the ssrA gene; the 2 termini fold to resemble tRNA(Ala) and it encodes a 'tag peptide', a short internal open reading frame. During trans-translation Ala-aminoacylated tmRNA acts like a tRNA, entering the A-site of stalled ribosomes, displacing the stalled mRNA. The ribosome then switches to translate the ORF on the tmRNA; the nascent peptide is terminated with the 'tag peptide' encoded by the tmRNA and targeted for degradation. The ribosome is freed to recommence translation, which seems to be the essential function of trans-translation. In Rhizobium johnstonii (strain DSM 114642 / LMG 32736 / 3841) (Rhizobium leguminosarum bv. viciae), this protein is SsrA-binding protein.